The sequence spans 1992 residues: E3 ubiquitin-protein ligase TRIP12 (1992 aa).

Over residues Met1–Gly10 the composition is skewed to polar residues. Disordered stretches follow at residues Met1–Glu398, Gln797–Asp817, and Ser938–Asp1080. The residue at position 2 (Ser2) is an N-acetylserine. A Phosphoserine modification is found at Ser12. The segment covering Arg18 to Asp27 has biased composition (polar residues). Residues Asp48 to Arg70 show a composition bias toward basic and acidic residues. Residues Ser77, Ser85, and Ser100 each carry the phosphoserine modification. The segment covering Pro78 to Ser88 has biased composition (polar residues). Positions Glu119–Lys132 are enriched in polar residues. 2 stretches are compositionally biased toward low complexity: residues Ser154–Thr166 and Pro175–Val216. The residue at position 181 (Lys181) is an N6-acetyllysine. The span at Pro280–Pro290 shows a compositional bias: polar residues. Residues Ser310 and Ser312 each carry the phosphoserine modification. A compositionally biased stretch (polar residues) spans Gln326 to Arg338. Positions Gly346 to Asp358 are enriched in basic and acidic residues. Polar residues-rich tracts occupy residues Glu360–Ala371 and Leu803–Ser812. Positions Met749–Lys836 constitute a WWE domain. Ser942 bears the Phosphoserine mark. Residues Thr948–Ala973 are compositionally biased toward low complexity. Phosphoserine is present on residues Ser991 and Ser997. The span at Lys1001–Lys1014 shows a compositional bias: basic residues. Position 1016 is a phosphoserine (Ser1016). Positions Pro1017–Asn1026 are enriched in basic and acidic residues. The segment covering Lys1029 to Ser1040 has biased composition (low complexity). Residue Ser1030 is modified to Phosphoserine. Residues Phe1041 to Ile1062 are compositionally biased toward polar residues. Ser1317, Ser1322, Ser1329, and Ser1376 each carry phosphoserine. At Thr1377 the chain carries Phosphothreonine. Disordered stretches follow at residues Ser1407–Lys1433 and Thr1568–Asp1587. Lys1425 is subject to N6-acetyllysine. A Phosphoserine modification is found at Ser1427. The K-box stretch occupies residues Glu1496 to Pro1570. In terms of domain architecture, HECT spans Pro1885 to Ser1992. Cys1959 acts as the Glycyl thioester intermediate in catalysis.

Belongs to the UPL family. K-HECT subfamily. As to quaternary structure, interacts with MYC; leading to disrupt interaction with isoform p19ARF/ARF of CDKN2A. Interacts with TRADD; leading to disrupt interaction with isoform p19ARF/ARF of CDKN2A. Interacts with SMARCC1; leading to disrupt interaction with SMARCE1.

The protein resides in the nucleus. It localises to the nucleoplasm. The enzyme catalyses S-ubiquitinyl-[E2 ubiquitin-conjugating enzyme]-L-cysteine + [acceptor protein]-L-lysine = [E2 ubiquitin-conjugating enzyme]-L-cysteine + N(6)-ubiquitinyl-[acceptor protein]-L-lysine.. It participates in protein modification; protein ubiquitination. In terms of biological role, E3 ubiquitin-protein ligase involved in ubiquitin fusion degradation (UFD) pathway and regulation of DNA repair. Part of the ubiquitin fusion degradation (UFD) pathway, a process that mediates ubiquitination of protein at their N-terminus, regardless of the presence of lysine residues in target proteins. Acts as a key regulator of DNA damage response by acting as a suppressor of RNF168, an E3 ubiquitin-protein ligase that promotes accumulation of 'Lys-63'-linked histone H2A and H2AX at DNA damage sites, thereby acting as a guard against excessive spreading of ubiquitinated chromatin at damaged chromosomes. In normal cells, mediates ubiquitination and degradation of isoform p19ARF/ARF of CDKN2A, a lysine-less tumor suppressor required for p53/TP53 activation under oncogenic stress. In cancer cells, however, isoform p19ARF/ARF and TRIP12 are located in different cell compartments, preventing isoform p19ARF/ARF ubiquitination and degradation. Does not mediate ubiquitination of isoform p16-INK4a of CDKN2A. Also catalyzes ubiquitination of NAE1 and SMARCE1, leading to their degradation. Ubiquitination and degradation of target proteins is regulated by interaction with proteins such as MYC, TRADD or SMARCC1, which disrupt the interaction between TRIP12 and target proteins. Mediates ubiquitination of ASXL1: following binding to N(6)-methyladenosine methylated DNA, ASXL1 is ubiquitinated by TRIP12, leading to its degradation and subsequent inactivation of the PR-DUB complex. The polypeptide is E3 ubiquitin-protein ligase TRIP12 (TRIP12) (Homo sapiens (Human)).